The chain runs to 206 residues: 3-isopropylmalate dehydratase small subunit (206 aa).

It belongs to the LeuD family. LeuD type 1 subfamily. In terms of assembly, heterodimer of LeuC and LeuD.

It catalyses the reaction (2R,3S)-3-isopropylmalate = (2S)-2-isopropylmalate. It functions in the pathway amino-acid biosynthesis; L-leucine biosynthesis; L-leucine from 3-methyl-2-oxobutanoate: step 2/4. Its function is as follows. Catalyzes the isomerization between 2-isopropylmalate and 3-isopropylmalate, via the formation of 2-isopropylmaleate. The chain is 3-isopropylmalate dehydratase small subunit from Acidobacterium capsulatum (strain ATCC 51196 / DSM 11244 / BCRC 80197 / JCM 7670 / NBRC 15755 / NCIMB 13165 / 161).